We begin with the raw amino-acid sequence, 902 residues long: Methionine--tRNA ligase, cytoplasmic (902 aa).

Residues 74 to 212 (GWEQDDLTNQ…QKQPQPQPPP (139 aa)) form the GST C-terminal domain. The short motif at 275 to 285 (PYVNNVPHLGN) is the 'HIGH' region element. A 'KMSKS' region motif is present at residues 595–599 (KFSKS). Position 598 (K598) interacts with ATP. A Phosphoserine modification is found at S827. Residue T837 is modified to Phosphothreonine. The WHEP-TRS domain occupies 843–899 (HIQTLTDEVTKQGNVVRELKAQKADKNQVAAEVAKLLDLKKQLALAEGKPIETPKGK).

It belongs to the class-I aminoacyl-tRNA synthetase family. In terms of assembly, monomer. Part of a multisubunit complex that groups tRNA ligases for Arg (RARS1), Asp (DARS1), Gln (QARS1), Ile (IARS1), Leu (LARS1), Lys (KARS1), Met (MARS1) the bifunctional ligase for Glu and Pro (EPRS1) and the auxiliary subunits AIMP1/p43, AIMP2/p38 and EEF1E1/p18. Forms a linear complex that contains MARS1, EEF1E1, EPRS1 and AIMP2 that is at the core of the multisubunit complex.

It localises to the cytoplasm. Its subcellular location is the cytosol. It is found in the nucleus. The protein resides in the nucleolus. The enzyme catalyses tRNA(Met) + L-methionine + ATP = L-methionyl-tRNA(Met) + AMP + diphosphate. Its function is as follows. Catalyzes the specific attachment of an amino acid to its cognate tRNA in a 2 step reaction: the amino acid (AA) is first activated by ATP to form AA-AMP and then transferred to the acceptor end of the tRNA. Plays a role in the synthesis of ribosomal RNA in the nucleolus. This is Methionine--tRNA ligase, cytoplasmic (Mars1) from Mus musculus (Mouse).